The chain runs to 357 residues: UPF0283 membrane protein BMEA_A1074 (357 aa).

The tract at residues M1–K36 is disordered. Residues E27 to K36 are compositionally biased toward basic and acidic residues. A run of 2 helical transmembrane segments spans residues I78–L98 and L109–L129.

The protein belongs to the UPF0283 family.

Its subcellular location is the cell inner membrane. This Brucella melitensis biotype 2 (strain ATCC 23457) protein is UPF0283 membrane protein BMEA_A1074.